A 301-amino-acid polypeptide reads, in one-letter code: Methionyl-tRNA formyltransferase (301 aa).

Position 110 to 113 (110 to 113 (SLLP)) interacts with (6S)-5,6,7,8-tetrahydrofolate.

It belongs to the Fmt family.

The enzyme catalyses L-methionyl-tRNA(fMet) + (6R)-10-formyltetrahydrofolate = N-formyl-L-methionyl-tRNA(fMet) + (6S)-5,6,7,8-tetrahydrofolate + H(+). In terms of biological role, attaches a formyl group to the free amino group of methionyl-tRNA(fMet). The formyl group appears to play a dual role in the initiator identity of N-formylmethionyl-tRNA by promoting its recognition by IF2 and preventing the misappropriation of this tRNA by the elongation apparatus. The protein is Methionyl-tRNA formyltransferase of Acidiphilium cryptum (strain JF-5).